The sequence spans 172 residues: Co-chaperone protein HscB homolog (172 aa).

One can recognise a J domain in the interval 2-74 (NHFELFGLVE…LRRAEYLLSL (73 aa)).

Belongs to the HscB family. In terms of assembly, interacts with HscA and stimulates its ATPase activity.

Functionally, co-chaperone involved in the maturation of iron-sulfur cluster-containing proteins. Seems to help targeting proteins to be folded toward HscA. The chain is Co-chaperone protein HscB homolog from Aeromonas salmonicida (strain A449).